A 331-amino-acid chain; its full sequence is MWLWEDQGGLLGPFSFVLVLLLVVTRSPFNACVLTGSLYLLLRFFSFEPVPSRRALQVLKPRDRVSAIAHRGGSHDAPENTLAAIRQAAKNGATGVELDIEFTSDGVPVLMHDNTVDRTTDGSGRLCDLTFEQVRKLNPAANHRLRNEFPDERIPTLREAVTECLCHNLTIFFDVKGHADMASAALKNIYMEFPQLYNNSMVCSFLPEVIYKMRQTDQKVITALTHRPWSLSHTGDGKPRYSVFWKQSVFVVLDILLDWSMHNVLWYLCGISAFLMQKDFVSPDYLKKWSAKGIQVVSWTVNTFDEKNYYESHLGSSYITDSMLEDCAPHF.

The Cytoplasmic portion of the chain corresponds to 1-3 (MWL). A helical transmembrane segment spans residues 4–24 (WEDQGGLLGPFSFVLVLLLVV). Residues 25 to 248 (TRSPFNACVL…PRYSVFWKQS (224 aa)) lie on the Lumenal side of the membrane. Residues 65–331 (VSAIAHRGGS…SMLEDCAPHF (267 aa)) enclose the GP-PDE domain. 2 residues coordinate Mg(2+): glutamate 97 and aspartate 99. Asparagine 168 is a glycosylation site (N-linked (GlcNAc...) asparagine). Residue aspartate 174 coordinates Mg(2+). The helical transmembrane segment at 249–269 (VFVVLDILLDWSMHNVLWYLC) threads the bilayer. Over 270–331 (GISAFLMQKD…SMLEDCAPHF (62 aa)) the chain is Cytoplasmic.

Belongs to the glycerophosphoryl diester phosphodiesterase family. In terms of assembly, interacts with PRAF2. Interacts with RGS16. The cofactor is Mg(2+). In terms of processing, N-glycosylated. As to expression, detected in heart, brain, lung, liver, skeletal muscle, kidney, pituitary and testis.

It localises to the cell membrane. The protein resides in the cytoplasmic vesicle membrane. It carries out the reaction sn-glycero-3-phospho-1D-myo-inositol + H2O = myo-inositol + sn-glycerol 3-phosphate + H(+). The catalysed reaction is 1-O-(1Z-octadecenyl)-sn-glycero-3-phospho-(N-5Z,8Z,11Z,14Z-eicosatetraenoyl)-ethanolamine + H2O = 1-O-(1Z-octadecenyl)-sn-glycero-3-phosphate + N-(5Z,8Z,11Z,14Z-eicosatetraenoyl)-ethanolamine + H(+). It catalyses the reaction 1-O-(1Z-octadecenyl)-sn-glycero-3-phospho-(N-9Z-octadecenoyl)-ethanolamine + H2O = 1-O-(1Z-octadecenyl)-sn-glycero-3-phosphate + N-(9Z-octadecenoyl) ethanolamine + H(+). The enzyme catalyses 1-O-(1Z-octadecenyl)-sn-glycero-3-phospho-N-hexadecanoyl-ethanolamine + H2O = 1-O-(1Z-octadecenyl)-sn-glycero-3-phosphate + N-hexadecanoylethanolamine + H(+). It carries out the reaction N-(4Z,7Z,10Z,13Z,16Z,19Z)-docosahexaenoyl-sn-glycero-3-phosphoethanolamine + H2O = N-(4Z,7Z,10Z,13Z,16Z,19Z)-docosahexaenoyl ethanolamine + sn-glycerol 3-phosphate + H(+). The catalysed reaction is N-eicosanoyl-sn-glycero-3-phosphoethanolamine + H2O = N-eicosanoyl ethanolamine + sn-glycerol 3-phosphate + H(+). It catalyses the reaction N-hexadecanoyl-sn-glycero-3-phosphoethanolamine + H2O = N-hexadecanoylethanolamine + sn-glycerol 3-phosphate + H(+). The enzyme catalyses N-(9Z-octadecenoyl)-sn-glycero-3-phosphoethanolamine + H2O = N-(9Z-octadecenoyl) ethanolamine + sn-glycerol 3-phosphate + H(+). It carries out the reaction N-(5Z,8Z,11Z,14Z-eicosatetraenoyl)-sn-glycero-3-phosphoethanolamine + H2O = N-(5Z,8Z,11Z,14Z-eicosatetraenoyl)-ethanolamine + sn-glycerol 3-phosphate + H(+). Inhibited by EDTA, calcium chloride, and zinc chloride. Enhanced by magnesium chloride. Glycerophosphodiester phosphodiesterase activity can be modulated by G-protein signaling pathways. Its function is as follows. Hydrolyzes the phosphodiester bond of glycerophosphodiesters such as glycerophosphoinositol (GroPIns) and glycerophosphoethanolamine (GroPEth), to yield a glycerol phosphate and an alcohol. Hydrolyzes glycerophospho-N-acylethanolamines to N-acylethanolamines in the brain and participates in bioactive N-acylethanolamine biosynthesis such as anandamide (an endocannabinoid), N-palmitoylethanolamine (an anti-inflammatory), and N-oleoylethanolamine (an anorexic). In addition, has a lysophospholipase D activity by hydrolyzing N-acyl-lysoplasmenylethanolamine (N-acyl-lysoPlsEt) to N-acylethanolamine. However lysophospholipase D activity is lower than glycerophosphodiester phosphodiesterase activity. Has little or no activity towards glycerophosphocholine. This is Glycerophosphodiester phosphodiesterase 1 from Rattus norvegicus (Rat).